The primary structure comprises 452 residues: Adenosylmethionine-8-amino-7-oxononanoate aminotransferase (452 aa).

116 to 117 (GS) provides a ligand contact to pyridoxal 5'-phosphate. Y152 is a binding site for substrate. Pyridoxal 5'-phosphate is bound at residue D257. K286, G321, and R414 together coordinate substrate. The residue at position 286 (K286) is an N6-(pyridoxal phosphate)lysine.

Belongs to the class-III pyridoxal-phosphate-dependent aminotransferase family. BioA subfamily. Homodimer. It depends on pyridoxal 5'-phosphate as a cofactor.

Its subcellular location is the cytoplasm. The catalysed reaction is (8S)-8-amino-7-oxononanoate + S-adenosyl-L-methionine = S-adenosyl-4-methylsulfanyl-2-oxobutanoate + (7R,8S)-7,8-diammoniononanoate. The protein operates within cofactor biosynthesis; biotin biosynthesis; 7,8-diaminononanoate from 8-amino-7-oxononanoate (SAM route): step 1/1. Functionally, catalyzes the transfer of the alpha-amino group from S-adenosyl-L-methionine (SAM) to 7-keto-8-aminopelargonic acid (KAPA) to form 7,8-diaminopelargonic acid (DAPA). It is the only aminotransferase known to utilize SAM as an amino donor. This Staphylococcus aureus (strain NCTC 8325 / PS 47) protein is Adenosylmethionine-8-amino-7-oxononanoate aminotransferase.